A 43-amino-acid polypeptide reads, in one-letter code: Protein PsbN (43 aa).

Residues 7 to 27 form a helical membrane-spanning segment; sequence IAIFISCLIVSFTGYALYTAF.

This sequence belongs to the PsbN family.

It is found in the plastid. Its subcellular location is the chloroplast thylakoid membrane. Functionally, may play a role in photosystem I and II biogenesis. This is Protein PsbN from Psilotum nudum (Whisk fern).